The following is a 549-amino-acid chain: Probable protein kinase UbiB (549 aa).

Residues 123–501 (DFNDTPLASA…QQKSHKSNYL (379 aa)) form the Protein kinase domain. ATP contacts are provided by residues 129–137 (LASASISQV) and Lys152. Asp287 serves as the catalytic Proton acceptor. 2 consecutive transmembrane segments (helical) span residues 498-518 (SNYL…LFTQ) and 519-539 (IVTL…WAIG).

It belongs to the ABC1 family. UbiB subfamily.

The protein resides in the cell inner membrane. Its pathway is cofactor biosynthesis; ubiquinone biosynthesis [regulation]. Is probably a protein kinase regulator of UbiI activity which is involved in aerobic coenzyme Q (ubiquinone) biosynthesis. The protein is Probable protein kinase UbiB of Shewanella frigidimarina (strain NCIMB 400).